Consider the following 174-residue polypeptide: Protein-export protein SecB (174 aa).

Belongs to the SecB family. In terms of assembly, homotetramer, a dimer of dimers. One homotetramer interacts with 1 SecA dimer.

It is found in the cytoplasm. One of the proteins required for the normal export of preproteins out of the cell cytoplasm. It is a molecular chaperone that binds to a subset of precursor proteins, maintaining them in a translocation-competent state. It also specifically binds to its receptor SecA. In Ehrlichia ruminantium (strain Gardel), this protein is Protein-export protein SecB.